A 73-amino-acid polypeptide reads, in one-letter code: Ocellatin-PT7 (73 aa).

The signal sequence occupies residues 1-22; sequence MAFLKKSLFLVLFLGLVSLSIC. The propeptide occupies 23 to 39; it reads DEEKRQDEDDDDDDDEE.

In terms of tissue distribution, expressed by the skin glands.

The protein localises to the secreted. Has antibacterial activity against Gram-negative bacteria E.coli ATCC 25922 (MIC=60 uM) and S.choleraesuis ATCC 14028 (MIC=240 uM) and against Gram-positive bacterium S.aureus ATCC 29313 (MIC=240 uM). Shows no hemolytic activity and no cytotoxicity. This Leptodactylus pustulatus (Ceara white-lipped frog) protein is Ocellatin-PT7.